Consider the following 306-residue polypeptide: tRNA dimethylallyltransferase 1 (306 aa).

Residue 13–20 coordinates ATP; it reads GPTASGKT. 15-20 contributes to the substrate binding site; it reads TASGKT. An interaction with substrate tRNA region spans residues 38–41; sequence DSRQ.

The protein belongs to the IPP transferase family. As to quaternary structure, monomer. Mg(2+) is required as a cofactor.

It carries out the reaction adenosine(37) in tRNA + dimethylallyl diphosphate = N(6)-dimethylallyladenosine(37) in tRNA + diphosphate. Its function is as follows. Catalyzes the transfer of a dimethylallyl group onto the adenine at position 37 in tRNAs that read codons beginning with uridine, leading to the formation of N6-(dimethylallyl)adenosine (i(6)A). This is tRNA dimethylallyltransferase 1 from Azobacteroides pseudotrichonymphae genomovar. CFP2.